Consider the following 335-residue polypeptide: Tetraacyldisaccharide 4'-kinase (335 aa).

59 to 66 is a binding site for ATP; sequence TAGGNGKT.

Belongs to the LpxK family.

It catalyses the reaction a lipid A disaccharide + ATP = a lipid IVA + ADP + H(+). It functions in the pathway glycolipid biosynthesis; lipid IV(A) biosynthesis; lipid IV(A) from (3R)-3-hydroxytetradecanoyl-[acyl-carrier-protein] and UDP-N-acetyl-alpha-D-glucosamine: step 6/6. Transfers the gamma-phosphate of ATP to the 4'-position of a tetraacyldisaccharide 1-phosphate intermediate (termed DS-1-P) to form tetraacyldisaccharide 1,4'-bis-phosphate (lipid IVA). The protein is Tetraacyldisaccharide 4'-kinase of Vibrio parahaemolyticus serotype O3:K6 (strain RIMD 2210633).